The following is a 41-amino-acid chain: Protein UL21 homolog (41 aa).

The protein belongs to the herpesviridae UL21 family.

The sequence is that of Protein UL21 homolog from Equine herpesvirus 4 (strain 1942) (EHV-4).